The following is a 122-amino-acid chain: uncharacterized protein (122 aa).

An N-terminal signal peptide occupies residues 1–33 (MASTVAGLSMSAESLRLPLLIGVSSGMLSVSDA).

This is an uncharacterized protein from Saccharomyces cerevisiae (strain ATCC 204508 / S288c) (Baker's yeast).